Consider the following 66-residue polypeptide: Large ribosomal subunit protein bL35 (66 aa).

Residues 22-41 (VMSAQRGKRHGMIKRTKKQI) are disordered. Basic residues predominate over residues 27–41 (RGKRHGMIKRTKKQI).

This sequence belongs to the bacterial ribosomal protein bL35 family.

This Rhodopseudomonas palustris (strain TIE-1) protein is Large ribosomal subunit protein bL35.